Reading from the N-terminus, the 148-residue chain is Truncated transcription factor CAULIFLOWER D (148 aa).

One can recognise an MADS-box domain in the interval 1-61; the sequence is MGRGRVEMKR…GKLFEYSSES (61 aa). Positions 90 to 148 constitute a K-box; partial domain; it reads QTNWSMEYSRLKAKIELWERNQRHYLGEDLESISIKELQNLEQQLDTSLKHIRSRKVCK.

In terms of assembly, homodimer capable of binding to CArG-box sequences.

Its subcellular location is the nucleus. Probable transcription factor that promotes early floral meristem identity in synergy with APETALA1, FRUITFULL and LEAFY. Is required subsequently for the transition of an inflorescence meristem into a floral meristem. Seems to be partially redundant to the function of APETALA1. This Brassica oleracea var. botrytis (Cauliflower) protein is Truncated transcription factor CAULIFLOWER D (CAL-D).